A 258-amino-acid chain; its full sequence is UPF0246 protein LHK_02295 (258 aa).

Belongs to the UPF0246 family.

This chain is UPF0246 protein LHK_02295, found in Laribacter hongkongensis (strain HLHK9).